The primary structure comprises 430 residues: mRNA cap guanine-N(7) methyltransferase (430 aa).

The disordered stretch occupies residues 1–88; the sequence is MALRPEKPVW…YDLEERKKKQ (88 aa). Residues 15-37 show a composition bias toward basic and acidic residues; sequence QYDRQYGKLEEPKPPREESKPGD. The region spanning 136-419 is the mRNA cap 0 methyltransferase domain; sequence SPIIKLRNFN…FYTVFAFRKV (284 aa). 145-146 is a binding site for mRNA; that stretch reads NN. K149, G167, D189, D218, Q244, and Y249 together coordinate S-adenosyl-L-methionine.

It belongs to the class I-like SAM-binding methyltransferase superfamily. mRNA cap 0 methyltransferase family.

The protein localises to the nucleus. The catalysed reaction is a 5'-end (5'-triphosphoguanosine)-ribonucleoside in mRNA + S-adenosyl-L-methionine = a 5'-end (N(7)-methyl 5'-triphosphoguanosine)-ribonucleoside in mRNA + S-adenosyl-L-homocysteine. Functionally, responsible for methylating the 5'-cap structure of mRNAs. The protein is mRNA cap guanine-N(7) methyltransferase (ABD1) of Eremothecium gossypii (strain ATCC 10895 / CBS 109.51 / FGSC 9923 / NRRL Y-1056) (Yeast).